The primary structure comprises 189 residues: uncharacterized protein (189 aa).

An N-terminal signal peptide occupies residues 1 to 19 (MNKLTILFLILALISVIYA). Residues 24 to 189 (PSSSEDSSSN…GSGSSGTVYY (166 aa)) form a disordered region. A compositionally biased stretch (low complexity) spans 25-69 (SSSEDSSSNDSNSQVTGSQSYSGSQSDSNSGSESHTINTGSSYSG). Positions 70–101 (SGSGSSGISGGSGSGSGSGSGSGSGSGSGSGA) are enriched in gly residues. Over residues 102 to 142 (VSGSQSGSGAVSGSQSGSGAVSGSQSGVQTGSQSGAGSASG) the composition is skewed to low complexity. The span at 144–157 (FTGNPSGSQSQEIN) shows a compositional bias: polar residues. Residues 165 to 183 (SGSGAPTGAATGSGSGSGS) show a composition bias toward gly residues.

This is an uncharacterized protein from Dictyostelium discoideum (Social amoeba).